The chain runs to 310 residues: Porphobilinogen deaminase (310 aa).

Cys-236 is modified (S-(dipyrrolylmethanemethyl)cysteine).

The protein belongs to the HMBS family. In terms of assembly, monomer. Dipyrromethane serves as cofactor.

The catalysed reaction is 4 porphobilinogen + H2O = hydroxymethylbilane + 4 NH4(+). The protein operates within porphyrin-containing compound metabolism; protoporphyrin-IX biosynthesis; coproporphyrinogen-III from 5-aminolevulinate: step 2/4. In terms of biological role, tetrapolymerization of the monopyrrole PBG into the hydroxymethylbilane pre-uroporphyrinogen in several discrete steps. The polypeptide is Porphobilinogen deaminase (Nitratiruptor sp. (strain SB155-2)).